The sequence spans 245 residues: uncharacterized protein (245 aa).

Over residues 162–174 (KEQSDVTTSERTR) the composition is skewed to basic and acidic residues. Positions 162-183 (KEQSDVTTSERTRSPPGSSKTT) are disordered.

This is an uncharacterized protein from Homo sapiens (Human).